We begin with the raw amino-acid sequence, 64 residues long: Alpha-conotoxin-like Lp1.7 (64 aa).

A signal peptide spans M1–S21. Positions F22–R41 are excised as a propeptide. Disulfide bonds link C47–C53 and C48–C61. A lacks the Ser-Xaa-Pro motif that is crucial for potent interaction with nAChR region spans residues D49–P51.

It belongs to the conotoxin A superfamily. In terms of tissue distribution, expressed by the venom duct.

It localises to the secreted. In terms of biological role, alpha-conotoxins act on postsynaptic membranes, they bind to the nicotinic acetylcholine receptors (nAChR) and thus inhibit them. Has possibly a distinct nAChR binding mode from other alpha-conotoxins, due to a different three residue motif (lacks the Ser-Xaa-Pro motif). This is Alpha-conotoxin-like Lp1.7 from Conus leopardus (Leopard cone).